A 1101-amino-acid chain; its full sequence is Rho GTPase-activating protein 30 (1101 aa).

The region spanning 20-215 (CDLQEHLQHS…FILTHVDQLF (196 aa)) is the Rho-GAP domain. Disordered regions lie at residues 224 to 243 (EVES…SPED), 300 to 400 (HETK…RAGG), and 451 to 529 (ALQH…AEDG). Residues 308–318 (RGAEDREDKSN) show a composition bias toward basic and acidic residues. Residues 360–376 (LENDSIEAAEGEQEPEA) are compositionally biased toward acidic residues. The segment covering 459–472 (ASGPGPGPGLGPGP) has biased composition (pro residues). Residues 508-520 (DSFSFLEDSSSSE) show a composition bias toward low complexity. At Ser-576 the chain carries Phosphoserine. 2 disordered regions span residues 621-906 (GPKP…QPSP) and 965-991 (CPRP…SWRN). Basic and acidic residues-rich tracts occupy residues 658–694 (GEDK…DRGE), 701–735 (TKVR…KGVE), 759–770 (EEAQVEAGRDLE), and 779–822 (AEEK…DSRS). Over residues 976 to 991 (GERAWGSRASRSSWRN) the composition is skewed to low complexity. At Ser-996 the chain carries Phosphoserine. The disordered stretch occupies residues 1050–1101 (LELPSEGAEGSGSRSRLSLPPREPQVPDPLLSSQRRSYAFETQANPGKGEGL). Residues 1053–1069 (PSEGAEGSGSRSRLSLP) are compositionally biased toward low complexity. The segment covering 1080 to 1094 (LSSQRRSYAFETQAN) has biased composition (polar residues).

Interacts with RHOU in a GTP-independent manner.

The protein localises to the cytoplasmic vesicle. GTPase-activating protein (GAP) for RAC1 and RHOA, but not for CDC42. This chain is Rho GTPase-activating protein 30 (ARHGAP30), found in Homo sapiens (Human).